A 439-amino-acid chain; its full sequence is Cln5-like protein 3 (439 aa).

Positions 1–24 (MKNMLNIILTLTIIFIGLIKISIS) are cleaved as a signal peptide. N-linked (GlcNAc...) asparagine glycosylation is found at N93, N112, N122, N138, N168, N219, N268, N289, N304, and N359. A helical transmembrane segment spans residues 371-391 (IIFISIAIGFGVVIILYISIG).

It belongs to the CLN5 family.

Its subcellular location is the membrane. The polypeptide is Cln5-like protein 3 (cln5lc) (Dictyostelium discoideum (Social amoeba)).